The sequence spans 335 residues: Phosphate acyltransferase (335 aa).

The protein belongs to the PlsX family. In terms of assembly, homodimer. Probably interacts with PlsY.

Its subcellular location is the cytoplasm. The catalysed reaction is a fatty acyl-[ACP] + phosphate = an acyl phosphate + holo-[ACP]. It functions in the pathway lipid metabolism; phospholipid metabolism. Functionally, catalyzes the reversible formation of acyl-phosphate (acyl-PO(4)) from acyl-[acyl-carrier-protein] (acyl-ACP). This enzyme utilizes acyl-ACP as fatty acyl donor, but not acyl-CoA. This Streptococcus pyogenes serotype M6 (strain ATCC BAA-946 / MGAS10394) protein is Phosphate acyltransferase.